The chain runs to 398 residues: Yellow-related salivary protein SP04 (398 aa).

The N-terminal stretch at 1–18 (MKWFLFLLSTIFVQGILG) is a signal peptide. Positions 73–94 (TLTEIERKKHPERSPPLSKFSG) are disordered. The span at 75 to 85 (TEIERKKHPER) shows a compositional bias: basic and acidic residues.

The protein belongs to the major royal jelly protein family. In terms of tissue distribution, female salivary gland (at protein level).

Its subcellular location is the secreted. Functionally, probably modulates blood feeding of sand flies on vertebrate species by binding and sequestering different mediators involved in the host response. Binds biogenic amines. Binds serotonin with high affinity. Binds histamine with low affinity. The protein is Yellow-related salivary protein SP04 of Phlebotomus argentipes (Phlebotomine sand fly).